The primary structure comprises 783 residues: Coiled-coil domain-containing protein 30 (783 aa).

Basic and acidic residues predominate over residues 1–22 (MSQEKNEMFESEWSKEREREKQ). Disordered regions lie at residues 1–26 (MSQE…LASG), 101–191 (LGGK…LTMK), and 209–231 (LLQS…SSGE). Positions 22-98 (QLASGLDTAE…LSQEFAQLNH (77 aa)) form a coiled coil. Positions 106 to 115 (APSNLITSEN) are enriched in polar residues. The segment covering 131-191 (IQSRKEETEE…EEKEQQLTMK (61 aa)) has biased composition (basic and acidic residues). 2 coiled-coil regions span residues 165 to 497 (REGQ…LNVH) and 527 to 622 (DKRI…RIIR). The segment at 731 to 755 (EEIKSKEAMASSKSPEKSPENLVCS) is disordered.

The protein belongs to the prefoldin subunit beta family. Expressed in brain, kidney, pancreas, placenta, liver, thymus and prostate.

The polypeptide is Coiled-coil domain-containing protein 30 (CCDC30) (Homo sapiens (Human)).